The sequence spans 115 residues: Large ribosomal subunit protein bL19 (115 aa).

This sequence belongs to the bacterial ribosomal protein bL19 family.

Functionally, this protein is located at the 30S-50S ribosomal subunit interface and may play a role in the structure and function of the aminoacyl-tRNA binding site. This chain is Large ribosomal subunit protein bL19, found in Streptococcus pneumoniae serotype 2 (strain D39 / NCTC 7466).